Consider the following 186-residue polypeptide: Adenine phosphoribosyltransferase (186 aa).

132 to 136 (ATGGS) lines the AMP pocket.

Belongs to the purine/pyrimidine phosphoribosyltransferase family. Homodimer. The cofactor is Mg(2+).

The protein localises to the cytoplasm. Its subcellular location is the nucleus. It carries out the reaction AMP + diphosphate = 5-phospho-alpha-D-ribose 1-diphosphate + adenine. It participates in purine metabolism; AMP biosynthesis via salvage pathway; AMP from adenine: step 1/1. Functionally, catalyzes a salvage reaction resulting in the formation of AMP, that is energically less costly than de novo synthesis. This chain is Adenine phosphoribosyltransferase (APT1), found in Debaryomyces hansenii (strain ATCC 36239 / CBS 767 / BCRC 21394 / JCM 1990 / NBRC 0083 / IGC 2968) (Yeast).